Consider the following 40-residue polypeptide: Photosystem II reaction center protein J (40 aa).

A helical membrane pass occupies residues 8–28 (IPLCLIGTVAGIAVIGLVGVF).

This sequence belongs to the PsbJ family. PSII is composed of 1 copy each of membrane proteins PsbA, PsbB, PsbC, PsbD, PsbE, PsbF, PsbH, PsbI, PsbJ, PsbK, PsbL, PsbM, PsbT, PsbX, PsbY, PsbZ, Psb30/Ycf12, at least 3 peripheral proteins of the oxygen-evolving complex and a large number of cofactors. It forms dimeric complexes.

The protein localises to the plastid. It localises to the chloroplast thylakoid membrane. Its function is as follows. One of the components of the core complex of photosystem II (PSII). PSII is a light-driven water:plastoquinone oxidoreductase that uses light energy to abstract electrons from H(2)O, generating O(2) and a proton gradient subsequently used for ATP formation. It consists of a core antenna complex that captures photons, and an electron transfer chain that converts photonic excitation into a charge separation. The chain is Photosystem II reaction center protein J from Triticum aestivum (Wheat).